A 642-amino-acid chain; its full sequence is Epithelial sodium channel subunit alpha (642 aa).

Residues 1–81 lie on the Cytoplasmic side of the membrane; sequence MHQVVTVKAE…VCSKRNKMKT (81 aa). A helical transmembrane segment spans residues 82-102; sequence AFWSVLFFLTFGLMYWQFGIL. The Extracellular portion of the chain corresponds to 103–553; it reads YREYFSFPVN…NQWSLWFGSS (451 aa). 10 disulfide bridges follow: Cys-130–Cys-297, Cys-222–Cys-229, Cys-274–Cys-281, Cys-385–Cys-470, Cys-407–Cys-447, Cys-407–Cys-466, Cys-411–Cys-462, Cys-420–Cys-447, Cys-420–Cys-470, and Cys-422–Cys-436. Residues 170 to 209 form a disordered region; it reads GAAQSSQKRSQRSLSHHVQRHPLRRRKRNEPVSLKGNSPP. The span at 178–197 shows a compositional bias: basic residues; sequence RSQRSLSHHVQRHPLRRRKR. A helical membrane pass occupies residues 554-574; the sequence is VLSVVELAELILDFIAITIIL. The Cytoplasmic portion of the chain corresponds to 575-642; it reads SFKRFRSRQV…RDGEAVIGLE (68 aa). Residues 587 to 608 are disordered; that stretch reads PSVPPPGAHDNTAFQSEPADPS.

It belongs to the amiloride-sensitive sodium channel (TC 1.A.6) family. SCNN1A subfamily. In terms of assembly, heterotrimer; disulfide-linked and containing an alpha/SCNN1A, a beta/SCNN1B and a gamma/SCNN1G subunit.

The protein resides in the apical cell membrane. Its subcellular location is the cell projection. It is found in the cilium. The protein localises to the cytoplasmic granule. It localises to the cytoplasm. The protein resides in the cytoplasmic vesicle. Its subcellular location is the secretory vesicle. It is found in the acrosome. The protein localises to the flagellum. It carries out the reaction Na(+)(in) = Na(+)(out). Originally identified and characterized by its inhibition by the diuretic drug amiloride. This is one of the three pore-forming subunits of the heterotrimeric epithelial sodium channel (ENaC), a critical regulator of sodium balance and fluid homeostasis. ENaC operates in epithelial tissues, where it mediates the electrodiffusion of sodium ions from extracellular fluid through the apical membrane of cells, with water following osmotically. The polypeptide is Epithelial sodium channel subunit alpha (Pelodiscus sinensis (Chinese softshell turtle)).